The primary structure comprises 97 residues: High mobility group protein homolog NHP1 (97 aa).

The segment at Met1–Lys24 is disordered. Positions Pro23–Ala93 form a DNA-binding region, HMG box.

The protein resides in the nucleus. The chain is High mobility group protein homolog NHP1 from Babesia bovis.